We begin with the raw amino-acid sequence, 492 residues long: Diacylglycerol kinase 7 (492 aa).

Residues 90 to 248 (APHAPMVVFI…SWKIVVSMPS (159 aa)) enclose the DAGKc domain.

It belongs to the eukaryotic diacylglycerol kinase family. As to quaternary structure, monomer. In terms of tissue distribution, highly expressed in flowers, and at low levels in roots, stems and leaves.

It catalyses the reaction a 1,2-diacyl-sn-glycerol + ATP = a 1,2-diacyl-sn-glycero-3-phosphate + ADP + H(+). Its function is as follows. Phosphorylates the second messenger diacylglycerol (DAG) to generate phosphatidic acid (PA), another important signaling molecule. PA is required for plant development and responses to abiotic stress and pathogen attack. May be involved in the accumulation of PA during cold stress xhibits high specificity for 1,2-dioleoyl-sn-glycerol (1,2-DOG), 1-palmitoyl, 2-oleoyl-sn-glycerol (1,2 POG), 1-stearoyl, 2-linoleoyl-sn-glycerol (1,2-SLG) and 1-oleoyl, 2-palmitoyl-sn-glycerol (1,2-OPG). The polypeptide is Diacylglycerol kinase 7 (DGK7) (Arabidopsis thaliana (Mouse-ear cress)).